Reading from the N-terminus, the 392-residue chain is ESX-1 secretion-associated protein EspA (392 aa).

A disordered region spans residues 302-392 (TRQALRPRAD…GQKVLVRNVV (91 aa)). Over residues 334–344 (QGMGGPVGMGG) the composition is skewed to gly residues.

As to quaternary structure, homodimer; disulfide-linked. An artificial EsxB-EsxA heterodimer interacts with EspA.

It is found in the secreted. Functionally, required for secretion of EsxA (ESAT-6) and EsxB (CFP-10) and for virulence. Involved in translocation of bacteria from the host (human) phagolysosome to the host cytoplasm. This chain is ESX-1 secretion-associated protein EspA, found in Mycobacterium tuberculosis (strain ATCC 25618 / H37Rv).